Reading from the N-terminus, the 167-residue chain is MNSNEIKAILEKIKKKLTNQVNKIKNIFIYIIYLKEYLNQLYEKKYFYREINDENYWKKYSNIEIYINGKKIGTSENINKSEYILLDLFMNGPIKININKKDKIYEITNIRKLRYLMLLYLGIVSKINIVFQQITPPTLNYEKNYKTEEIVDNYFVLHVYVWNEIKK.

It belongs to the A.longa ORF167/ORF288 family.

Its subcellular location is the plastid. This is an uncharacterized protein from Euglena longa (Euglenophycean alga).